We begin with the raw amino-acid sequence, 262 residues long: Snake venom serine proteinase 1 (262 aa).

Residues 1–18 form the signal peptide; the sequence is MVLIRVLANLLILQLSYA. Residues 19 to 24 constitute a propeptide that is removed on maturation; that stretch reads QKSSEL. The Peptidase S1 domain occupies 25–253; it reads VIGGDECNIN…HLDWIQSIIA (229 aa). 5 disulfides stabilise this stretch: Cys-31-Cys-165, Cys-52-Cys-68, Cys-144-Cys-214, Cys-176-Cys-193, and Cys-204-Cys-229. The active-site Charge relay system is the His-67. A glycan (N-linked (GlcNAc...) asparagine) is linked at Asn-105. Residue Asp-112 is the Charge relay system of the active site. Ser-208 acts as the Charge relay system in catalysis.

This sequence belongs to the peptidase S1 family. Snake venom subfamily. As to quaternary structure, monomer. In terms of tissue distribution, expressed by the venom gland.

Its subcellular location is the secreted. Snake venom serine protease that may act in the hemostasis system of the prey. This chain is Snake venom serine proteinase 1, found in Crotalus adamanteus (Eastern diamondback rattlesnake).